A 149-amino-acid chain; its full sequence is FAD synthase (149 aa).

Residues 15–16 (VF), 20–23 (HVGH), and Asp-101 each bind ATP.

The protein belongs to the archaeal FAD synthase family. In terms of assembly, homodimer. A divalent metal cation serves as cofactor.

The enzyme catalyses FMN + ATP + H(+) = FAD + diphosphate. It functions in the pathway cofactor biosynthesis; FAD biosynthesis; FAD from FMN: step 1/1. Catalyzes the transfer of the AMP portion of ATP to flavin mononucleotide (FMN) to produce flavin adenine dinucleotide (FAD) coenzyme. The polypeptide is FAD synthase (Thermococcus kodakarensis (strain ATCC BAA-918 / JCM 12380 / KOD1) (Pyrococcus kodakaraensis (strain KOD1))).